The sequence spans 175 residues: ATP synthase subunit b (175 aa).

The helical transmembrane segment at 22 to 44 (MLVQLFFFLILLALLKKFAWGPL) threads the bilayer.

It belongs to the ATPase B chain family. In terms of assembly, F-type ATPases have 2 components, F(1) - the catalytic core - and F(0) - the membrane proton channel. F(1) has five subunits: alpha(3), beta(3), gamma(1), delta(1), epsilon(1). F(0) has three main subunits: a(1), b(2) and c(10-14). The alpha and beta chains form an alternating ring which encloses part of the gamma chain. F(1) is attached to F(0) by a central stalk formed by the gamma and epsilon chains, while a peripheral stalk is formed by the delta and b chains.

Its subcellular location is the cell membrane. Its function is as follows. F(1)F(0) ATP synthase produces ATP from ADP in the presence of a proton or sodium gradient. F-type ATPases consist of two structural domains, F(1) containing the extramembraneous catalytic core and F(0) containing the membrane proton channel, linked together by a central stalk and a peripheral stalk. During catalysis, ATP synthesis in the catalytic domain of F(1) is coupled via a rotary mechanism of the central stalk subunits to proton translocation. Functionally, component of the F(0) channel, it forms part of the peripheral stalk, linking F(1) to F(0). In Oceanobacillus iheyensis (strain DSM 14371 / CIP 107618 / JCM 11309 / KCTC 3954 / HTE831), this protein is ATP synthase subunit b.